A 256-amino-acid polypeptide reads, in one-letter code: uncharacterized protein (256 aa).

Residues 187-223 adopt a coiled-coil conformation; it reads MEEEEISEVEDALNVLQRLCAQEEGDNKEAETNNNNY.

This is an uncharacterized protein from Ostreid herpesvirus 1 (isolate France) (OsHV-1).